A 154-amino-acid chain; its full sequence is Cysteine-rich DPF motif domain-containing protein 1 (154 aa).

Belongs to the CDPF1 family.

In Drosophila melanogaster (Fruit fly), this protein is Cysteine-rich DPF motif domain-containing protein 1.